The primary structure comprises 172 residues: RNA pyrophosphohydrolase (172 aa).

Positions 6-149 (GYRPNVGIIL…KRDVYRMALK (144 aa)) constitute a Nudix hydrolase domain. A Nudix box motif is present at residues 38-59 (GGIKYGESPEQAMYRELMEEVG).

The protein belongs to the Nudix hydrolase family. RppH subfamily. A divalent metal cation serves as cofactor.

Functionally, accelerates the degradation of transcripts by removing pyrophosphate from the 5'-end of triphosphorylated RNA, leading to a more labile monophosphorylated state that can stimulate subsequent ribonuclease cleavage. The polypeptide is RNA pyrophosphohydrolase (Methylobacillus flagellatus (strain ATCC 51484 / DSM 6875 / VKM B-1610 / KT)).